The chain runs to 129 residues: Small ribosomal subunit protein uS11 (129 aa).

Belongs to the universal ribosomal protein uS11 family. In terms of assembly, part of the 30S ribosomal subunit. Interacts with proteins S7 and S18. Binds to IF-3.

Its function is as follows. Located on the platform of the 30S subunit, it bridges several disparate RNA helices of the 16S rRNA. Forms part of the Shine-Dalgarno cleft in the 70S ribosome. This chain is Small ribosomal subunit protein uS11, found in Staphylococcus epidermidis (strain ATCC 12228 / FDA PCI 1200).